The sequence spans 78 residues: Small ribosomal subunit protein bS16c (78 aa).

The protein belongs to the bacterial ribosomal protein bS16 family.

The protein resides in the plastid. It localises to the chloroplast. This is Small ribosomal subunit protein bS16c from Gracilaria tenuistipitata var. liui (Red alga).